A 461-amino-acid polypeptide reads, in one-letter code: Zinc finger protein ZFP2 (461 aa).

C2H2-type zinc fingers lie at residues 102–124 (YECNQCSKTFSQSSSLLKHQRIH), 130–152 (YKCNVCGKHFIERSSLTVHQRIH), 158–180 (YKCNECGKAFSQSMNLTVHQRTH), 186–208 (YQCKECGKAFHKNSSLIQHERIH), 214–236 (YKCNECGKAFTQSMNLTVHQRTH), 242–264 (YECNECGKAFSQSMHLIVHQRSH), 270–292 (YECSQCGKAFSKSSTLTLHQRNH), 298–320 (YKCNKCGKSFSQSTYLIEHQRLH), 326–348 (FECNECGKAFSKNSSLTQHRRIH), 354–376 (YECMVCGKHFTGRSSLTVHQVIH), 382–404 (YECNECGKAFSQSAYLIEHQRIH), 410–432 (YECDQCGKAFIKNSSLTVHQRTH), and 438–460 (YQCNECGKAFSRSTNLTRHQRTH).

This sequence belongs to the krueppel C2H2-type zinc-finger protein family.

The protein localises to the nucleus. Its function is as follows. Probable transcription factor involved in neuronal differentiation and/or phenotypic maintenance. The polypeptide is Zinc finger protein ZFP2 (ZFP2) (Homo sapiens (Human)).